The following is a 145-amino-acid chain: Transcription antitermination protein NusB (145 aa).

It belongs to the NusB family.

In terms of biological role, involved in transcription antitermination. Required for transcription of ribosomal RNA (rRNA) genes. Binds specifically to the boxA antiterminator sequence of the ribosomal RNA (rrn) operons. The polypeptide is Transcription antitermination protein NusB (Geotalea daltonii (strain DSM 22248 / JCM 15807 / FRC-32) (Geobacter daltonii)).